Reading from the N-terminus, the 180-residue chain is ATP-dependent protease subunit HslV (180 aa).

Thr-5 is an active-site residue. Residues Gly-161, Cys-164, and Thr-167 each coordinate Na(+).

The protein belongs to the peptidase T1B family. HslV subfamily. As to quaternary structure, a double ring-shaped homohexamer of HslV is capped on each side by a ring-shaped HslU homohexamer. The assembly of the HslU/HslV complex is dependent on binding of ATP.

Its subcellular location is the cytoplasm. It catalyses the reaction ATP-dependent cleavage of peptide bonds with broad specificity.. Its activity is regulated as follows. Allosterically activated by HslU binding. In terms of biological role, protease subunit of a proteasome-like degradation complex believed to be a general protein degrading machinery. The protein is ATP-dependent protease subunit HslV of Campylobacter lari (strain RM2100 / D67 / ATCC BAA-1060).